The chain runs to 167 residues: NADH-ubiquinone oxidoreductase chain 6 (167 aa).

Helical transmembrane passes span I5 to L25, M34 to C54, L60 to I80, and F138 to I158.

It belongs to the complex I subunit 6 family.

Its subcellular location is the mitochondrion membrane. It catalyses the reaction a ubiquinone + NADH + 5 H(+)(in) = a ubiquinol + NAD(+) + 4 H(+)(out). Functionally, core subunit of the mitochondrial membrane respiratory chain NADH dehydrogenase (Complex I) that is believed to belong to the minimal assembly required for catalysis. Complex I functions in the transfer of electrons from NADH to the respiratory chain. The immediate electron acceptor for the enzyme is believed to be ubiquinone. This chain is NADH-ubiquinone oxidoreductase chain 6 (ND6), found in Apis mellifera ligustica (Common honeybee).